The sequence spans 396 residues: Ribosomal RNA large subunit methyltransferase I (396 aa).

The region spanning 2–81 (SVRLVLTKGR…ETIDIAFFTR (80 aa)) is the PUA domain.

It belongs to the methyltransferase superfamily. RlmI family.

It is found in the cytoplasm. The enzyme catalyses cytidine(1962) in 23S rRNA + S-adenosyl-L-methionine = 5-methylcytidine(1962) in 23S rRNA + S-adenosyl-L-homocysteine + H(+). In terms of biological role, specifically methylates the cytosine at position 1962 (m5C1962) of 23S rRNA. This Enterobacter sp. (strain 638) protein is Ribosomal RNA large subunit methyltransferase I.